Reading from the N-terminus, the 736-residue chain is MQWTPEHAQWAEQHFDISSTTRSLAHKAEAYRGHLQRTYQYAWANDDISALTASNLLKKYAEKYSGILEGPSERALLCSYSESAPGLLNGRKSESDAWQEGIYPMSCAADVISASKTGMTPALPPPDVTASVGSSTGVASSLSEPSYSSSNCGNHASALHSGIPSQEFASSYNGSYLHSTYSGGQSTPALPSPHPSPLHSAGLLQPPPPPPPTLVPSYNTSSPNLSSYNYPPAGYPPQTPVAPGYSPGGAPPPSAYLPSGIAAPTPLPPSTIPGYSYQSHNHAPIAPTPLNGSSANTLKRKAFYMTGQGDMDSSYGNFNYSQQRSAQSPMYRMPDNSLVDSTRGNGFDRNADTSSLAFKPTKQSMPTDQQRKFGSQAGRALTPPSYGSSKGSLGSMRSGESFGKFGSPVMSDHGDDSRQHLPHSIDTATSSSHPAEEQLKNSDANLVEMVTTEILQQTSPVDWSDIAGLEMAKATIKDEVLWPILRPDMFSGLATLPRSILLFGPQGTGRTLLGRCMASQLGAAFLLLSGSALVTKWLGEGEKIVQASFLIARCRQPSVVFISDVDLLLSSQLSEESPVNRIKSELLLQLDGVLSSPEEHVLVVCSTSKPEEIDESLRRYFVKRLLVPLPDATARHQIISQLLSQHNYCLSDKEVTLLVQRTDGFSGLDVVRLCQEALVGPLHGMPGADLSGMIPGQMRPVSYQDFENVFCKIQPSISQKELDTYTEWNKMFGCSQ.

Disordered regions lie at residues 118–155 (GMTPALPPPDVTASVGSSTGVASSLSEPSYSSSNCGNH), 180–248 (TYSG…YSPG), 272–295 (IPGYSYQSHNHAPIAPTPLNGSSA), and 341–438 (STRG…AEEQ). Residues 128 to 150 (VTASVGSSTGVASSLSEPSYSSS) are compositionally biased toward low complexity. The segment covering 205-214 (QPPPPPPPTL) has biased composition (pro residues). The segment covering 216–232 (PSYNTSSPNLSSYNYPP) has biased composition (low complexity). Residues 352–368 (DTSSLAFKPTKQSMPTD) show a composition bias toward polar residues. ATP-binding positions include Ala467 and 507–512 (GTGRTL).

Belongs to the AAA ATPase family.

It is found in the nucleus matrix. The protein resides in the cytoplasm. The protein localises to the cytoskeleton. Its subcellular location is the microtubule organizing center. It localises to the centrosome. In terms of biological role, ATP-dependent microtubule severing protein. Severs microtubules along their length and depolymerizes their ends, primarily the minus-end, suppressing microtubule growth from and attachment to centrosomes. Microtubule severing may promote rapid reorganization of cellular microtubule arrays and the release of microtubules from the centrosome following nucleation. Microtubule release from the mitotic spindle poles may allow depolymerization of the microtubule end proximal to the spindle pole, leading to poleward microtubule flux and poleward motion of chromosome. This chain is Fidgetin (fign), found in Danio rerio (Zebrafish).